We begin with the raw amino-acid sequence, 247 residues long: Ribose-5-phosphate isomerase (247 aa).

It belongs to the ribose 5-phosphate isomerase family.

It localises to the cytoplasm. It catalyses the reaction aldehydo-D-ribose 5-phosphate = D-ribulose 5-phosphate. It functions in the pathway carbohydrate degradation; pentose phosphate pathway; D-ribose 5-phosphate from D-ribulose 5-phosphate (non-oxidative stage): step 1/1. This chain is Ribose-5-phosphate isomerase (RKI1), found in Meyerozyma guilliermondii (strain ATCC 6260 / CBS 566 / DSM 6381 / JCM 1539 / NBRC 10279 / NRRL Y-324) (Yeast).